The chain runs to 464 residues: Arginine biosynthesis bifunctional protein ArgJ, chloroplastic (464 aa).

Positions 208, 234, 245, 332, 459, and 464 each coordinate substrate. The Nucleophile role is filled by T245.

The protein belongs to the ArgJ family. As to quaternary structure, heterodimer of an alpha and a beta chain.

The protein localises to the plastid. The protein resides in the chloroplast. It catalyses the reaction N(2)-acetyl-L-ornithine + L-glutamate = N-acetyl-L-glutamate + L-ornithine. The enzyme catalyses L-glutamate + acetyl-CoA = N-acetyl-L-glutamate + CoA + H(+). The protein operates within amino-acid biosynthesis; L-arginine biosynthesis; L-ornithine and N-acetyl-L-glutamate from L-glutamate and N(2)-acetyl-L-ornithine (cyclic): step 1/1. It functions in the pathway amino-acid biosynthesis; L-arginine biosynthesis; N(2)-acetyl-L-ornithine from L-glutamate: step 1/4. In terms of biological role, catalyzes two activities which are involved in the cyclic version of arginine biosynthesis: the synthesis of acetylglutamate from glutamate and acetyl-CoA, and of ornithine by transacetylation between acetylornithine and glutamate. This Zea mays (Maize) protein is Arginine biosynthesis bifunctional protein ArgJ, chloroplastic.